Here is a 655-residue protein sequence, read N- to C-terminus: DNA mismatch repair protein MutL (655 aa).

Disordered regions lie at residues 357 to 416 (EKKQ…DDYT) and 439 to 460 (DFDSDISNHSDSDIKGSVSKDP). Over residues 371–383 (SHEEDEKNDDKAY) the composition is skewed to basic and acidic residues. Residues 402-416 (NTSVSTSPNSDDDYT) are compositionally biased toward polar residues.

This sequence belongs to the DNA mismatch repair MutL/HexB family.

In terms of biological role, this protein is involved in the repair of mismatches in DNA. It is required for dam-dependent methyl-directed DNA mismatch repair. May act as a 'molecular matchmaker', a protein that promotes the formation of a stable complex between two or more DNA-binding proteins in an ATP-dependent manner without itself being part of a final effector complex. In Staphylococcus saprophyticus subsp. saprophyticus (strain ATCC 15305 / DSM 20229 / NCIMB 8711 / NCTC 7292 / S-41), this protein is DNA mismatch repair protein MutL.